We begin with the raw amino-acid sequence, 38 residues long: Photosystem II reaction center protein L (38 aa).

A helical transmembrane segment spans residues 17 to 37 (SLFWGLLLIFVLAVLFSSYFF).

The protein belongs to the PsbL family. As to quaternary structure, PSII is composed of 1 copy each of membrane proteins PsbA, PsbB, PsbC, PsbD, PsbE, PsbF, PsbH, PsbI, PsbJ, PsbK, PsbL, PsbM, PsbT, PsbX, PsbY, PsbZ, Psb30/Ycf12, at least 3 peripheral proteins of the oxygen-evolving complex and a large number of cofactors. It forms dimeric complexes.

The protein localises to the plastid. The protein resides in the chloroplast thylakoid membrane. In terms of biological role, one of the components of the core complex of photosystem II (PSII). PSII is a light-driven water:plastoquinone oxidoreductase that uses light energy to abstract electrons from H(2)O, generating O(2) and a proton gradient subsequently used for ATP formation. It consists of a core antenna complex that captures photons, and an electron transfer chain that converts photonic excitation into a charge separation. This subunit is found at the monomer-monomer interface and is required for correct PSII assembly and/or dimerization. This Porphyra purpurea (Red seaweed) protein is Photosystem II reaction center protein L.